A 388-amino-acid chain; its full sequence is Regulator of G-protein signaling 20 (388 aa).

Residues 138-199 (PGRPSGGRPL…TPGAAPGQPG (62 aa)) are disordered. Residues 185-197 (PAAQDTPGAAPGQ) are compositionally biased toward low complexity. The 117-residue stretch at 262–378 (SFDKLMVTPA…MNSAVYKDLL (117 aa)) folds into the RGS domain.

Forms a complex with G(alpha)z/i2 subunits and mu-opioid receptors; the formation of this complex results in mu-opioid receptor desensitization. Interacts with OPRM1. Post-translationally, fatty acylated. Heavily palmitoylated in the cysteine string motif. In terms of processing, N- and O-glycosylated in synapsomal membranes. Serine phosphorylated in synapsomal membranes. Post-translationally, sumoylated with SUMO1 and SUMO2 in synaptosomes. The sumoylated forms act as a scaffold for sequestering mu-opioid receptor-activated G(alpha) subunits. In terms of tissue distribution, isoform 5 is expressed in brain at high levels in the caudate nucleus and temporal lobe.

Its subcellular location is the membrane. It localises to the nucleus. It is found in the cytoplasm. Inhibits signal transduction by increasing the GTPase activity of G protein alpha subunits thereby driving them into their inactive GDP-bound form. Binds selectively to G(z)-alpha and G(alpha)-i2 subunits, accelerates their GTPase activity and regulates their signaling activities. The G(z)-alpha activity is inhibited by the phosphorylation and palmitoylation of the G-protein. Negatively regulates mu-opioid receptor-mediated activation of the G-proteins. The chain is Regulator of G-protein signaling 20 (RGS20) from Homo sapiens (Human).